A 1018-amino-acid polypeptide reads, in one-letter code: Thrombospondin type-1 domain-containing protein 4 (1018 aa).

Residues 1 to 26 (MVSYLTSCLSALSTLLLLLGSQLVCP) form the signal peptide. Disordered stretches follow at residues 34–56 (KVPQ…SPGV), 116–240 (HRSQ…PSEA), and 534–623 (SPQV…NWKQ). The TSP type-1 1 domain occupies 54–307 (PGVWGSWGPW…YKLCNTNACP (254 aa)). Residues 187–199 (QRLRRQRPSSRHS) are compositionally biased toward basic residues. A compositionally biased stretch (polar residues) spans 216-230 (HQFSHSQPLYQSDSG). 2 stretches are compositionally biased toward basic and acidic residues: residues 558 to 573 (QEDR…KEDS) and 592 to 603 (RHPERFPSHRPD). TSP type-1 domains are found at residues 676-737 (CPAF…KICS), 739-792 (WQIR…DMGP), 793-851 (CAKS…GPCT), 852-911 (GKVE…HLKP), and 912-968 (CGAK…QDCV). The 38-residue stretch at 971–1008 (VDENCKDKYYNCNVVVQARLCVYNYYKTACCASCTRVA) folds into the PLAC domain.

In terms of assembly, isoform 2 interacts with FBN1. Isoform 2 may interact with TGFB1. As to expression, both isoforms are expressed in the embryo from 7 dpc through 17. Isoform 1 is widely expressed in adult tissues. Isoform 2 is detected in brain, spinal cord, eye, kidney, stomach and uterus. Mainly observed in fibrillar extracellular matrices in elastic tissues (at protein level).

It is found in the secreted. It localises to the extracellular space. Its subcellular location is the extracellular matrix. Functionally, promotes FBN1 matrix assembly. Attenuates TGFB signaling, possibly by accelerating the sequestration of large latent complexes of TGFB or active TGFB by FBN1 microfibril assembly, thereby negatively regulating the expression of TGFB regulatory targets, such as POSTN. The chain is Thrombospondin type-1 domain-containing protein 4 (Thsd4) from Mus musculus (Mouse).